Reading from the N-terminus, the 339-residue chain is Fructose-1,6-bisphosphatase class 1 (339 aa).

The Mg(2+) site is built by Glu-91, Asp-113, Leu-115, and Asp-116. Residues 116–119 (DGSS), Asn-210, and Lys-276 each bind substrate. Glu-282 contributes to the Mg(2+) binding site.

It belongs to the FBPase class 1 family. Homotetramer. It depends on Mg(2+) as a cofactor.

It localises to the cytoplasm. It carries out the reaction beta-D-fructose 1,6-bisphosphate + H2O = beta-D-fructose 6-phosphate + phosphate. The protein operates within carbohydrate biosynthesis; gluconeogenesis. This is Fructose-1,6-bisphosphatase class 1 from Bordetella bronchiseptica (strain ATCC BAA-588 / NCTC 13252 / RB50) (Alcaligenes bronchisepticus).